The primary structure comprises 273 residues: 2-dehydro-3-deoxyphosphooctonate aldolase (273 aa).

Belongs to the KdsA family.

The protein resides in the cytoplasm. It catalyses the reaction D-arabinose 5-phosphate + phosphoenolpyruvate + H2O = 3-deoxy-alpha-D-manno-2-octulosonate-8-phosphate + phosphate. Its pathway is carbohydrate biosynthesis; 3-deoxy-D-manno-octulosonate biosynthesis; 3-deoxy-D-manno-octulosonate from D-ribulose 5-phosphate: step 2/3. The protein operates within bacterial outer membrane biogenesis; lipopolysaccharide biosynthesis. The protein is 2-dehydro-3-deoxyphosphooctonate aldolase of Nitratidesulfovibrio vulgaris (strain DP4) (Desulfovibrio vulgaris).